The sequence spans 441 residues: Phenylalanine-4-hydroxylase (441 aa).

The region spanning Phe23 to Asn102 is the ACT domain. Positions 273, 278, and 318 each coordinate Fe cation.

Belongs to the biopterin-dependent aromatic amino acid hydroxylase family. In terms of assembly, homotetramer. Fe(2+) serves as cofactor.

The catalysed reaction is (6R)-L-erythro-5,6,7,8-tetrahydrobiopterin + L-phenylalanine + O2 = (4aS,6R)-4a-hydroxy-L-erythro-5,6,7,8-tetrahydrobiopterin + L-tyrosine. It carries out the reaction (6R)-L-erythro-5,6,7,8-tetrahydrobiopterin + L-tryptophan + O2 = 5-hydroxy-L-tryptophan + (4aS,6R)-4a-hydroxy-L-erythro-5,6,7,8-tetrahydrobiopterin. Its pathway is amino-acid degradation; L-phenylalanine degradation; acetoacetate and fumarate from L-phenylalanine: step 1/6. Functionally, catalyzes the hydroxylation of L-phenylalanine. Hydroxylates L-tryptophan to 5-hydroxy-L-tryptophan but does not hydroxylate L-tyrosine to L-DOPA. It uses D-threo-tetrahydrodictyopterin (DH4), also known as dictyoperin, as a cofactor. The chain is Phenylalanine-4-hydroxylase (pah) from Dictyostelium discoideum (Social amoeba).